A 325-amino-acid chain; its full sequence is Tryptophan--tRNA ligase (325 aa).

ATP-binding positions include 9–11 (QPS) and 17–18 (GN). The 'HIGH' region motif lies at 10–18 (PSGILHIGN). D132 contacts L-tryptophan. Residues 144-146 (GKD), V184, and 191-195 (KMSKS) contribute to the ATP site. The 'KMSKS' region signature appears at 191–195 (KMSKS).

Belongs to the class-I aminoacyl-tRNA synthetase family. Homodimer.

The protein localises to the cytoplasm. The catalysed reaction is tRNA(Trp) + L-tryptophan + ATP = L-tryptophyl-tRNA(Trp) + AMP + diphosphate + H(+). Functionally, catalyzes the attachment of tryptophan to tRNA(Trp). This chain is Tryptophan--tRNA ligase, found in Fusobacterium nucleatum subsp. nucleatum (strain ATCC 25586 / DSM 15643 / BCRC 10681 / CIP 101130 / JCM 8532 / KCTC 2640 / LMG 13131 / VPI 4355).